The primary structure comprises 238 residues: Putative tyrosine-protein phosphatase OCA1 (238 aa).

A disordered region spans residues 1–43; the sequence is MTSKVGEYEDVPEDESRLTEENVSVPEEEVEDEDEEEDDDDDH. Thr2 bears the N-acetylthreonine mark. Ser24 carries the phosphoserine modification. Acidic residues predominate over residues 26-42; the sequence is PEEEVEDEDEEEDDDDD. Residues 72-230 form the Tyrosine-protein phosphatase domain; the sequence is NFCPVERYLY…LVKIDKNKAP (159 aa). The Phosphocysteine intermediate role is filled by Cys168.

Belongs to the protein-tyrosine phosphatase family.

The protein resides in the cytoplasm. It carries out the reaction O-phospho-L-tyrosyl-[protein] + H2O = L-tyrosyl-[protein] + phosphate. Functionally, putative tyrosine-protein phosphatase required for protection against superoxide stress. Involved in cell-cycle delay in response to linoleic acid hydroperoxide (LoaOOH). The chain is Putative tyrosine-protein phosphatase OCA1 (OCA1) from Saccharomyces cerevisiae (strain YJM789) (Baker's yeast).